The following is a 64-amino-acid chain: Large ribosomal subunit protein bL28 (64 aa).

The protein belongs to the bacterial ribosomal protein bL28 family.

The polypeptide is Large ribosomal subunit protein bL28 (Campylobacter jejuni subsp. doylei (strain ATCC BAA-1458 / RM4099 / 269.97)).